The following is a 142-amino-acid chain: Ribosome-binding factor A (142 aa).

Residues 118–142 (DEAKQQEHGTVENAKQDGDKAEDDK) form a disordered region.

Belongs to the RbfA family. As to quaternary structure, monomer. Binds 30S ribosomal subunits, but not 50S ribosomal subunits or 70S ribosomes.

It localises to the cytoplasm. In terms of biological role, one of several proteins that assist in the late maturation steps of the functional core of the 30S ribosomal subunit. Associates with free 30S ribosomal subunits (but not with 30S subunits that are part of 70S ribosomes or polysomes). Required for efficient processing of 16S rRNA. May interact with the 5'-terminal helix region of 16S rRNA. In Shewanella piezotolerans (strain WP3 / JCM 13877), this protein is Ribosome-binding factor A.